The primary structure comprises 131 residues: Hypocretin neuropeptide precursor (131 aa).

Q34 is subject to Pyrrolidone carboxylic acid. Disulfide bonds link C39-C45 and C40-C47. Residue L66 is modified to Leucine amide. The tract at residues 104–131 (EPALRPCSGRRCPSEAASSVAPGGRSGV) is disordered.

It belongs to the orexin family.

It localises to the rough endoplasmic reticulum. The protein localises to the cytoplasmic vesicle. Its subcellular location is the synapse. Neuropeptides that play a significant role in the regulation of food intake and sleep-wakefulness, possibly by coordinating the complex behavioral and physiologic responses of these complementary homeostatic functions. A broader role in the homeostatic regulation of energy metabolism, autonomic function, hormonal balance and the regulation of body fluids, is also suggested. In terms of biological role, binds to orexin receptors HCRTR1/OX1R and HCRTR2/OX2R with a high affinity. Stimulates food intake. Modulates pituitary luteinizing hormone secretion in an ovarian steroid-dependent manner. Functionally, binds to orexin receptor HCRTR2/OX2R only. Stimulates food intake. Modulates pituitary luteinizing hormone secretion in an ovarian steroid-dependent manner. The polypeptide is Hypocretin neuropeptide precursor (HCRT) (Bos taurus (Bovine)).